We begin with the raw amino-acid sequence, 288 residues long: ATP synthase gamma chain (288 aa).

The protein belongs to the ATPase gamma chain family. In terms of assembly, F-type ATPases have 2 components, CF(1) - the catalytic core - and CF(0) - the membrane proton channel. CF(1) has five subunits: alpha(3), beta(3), gamma(1), delta(1), epsilon(1). CF(0) has three main subunits: a, b and c.

Its subcellular location is the cell inner membrane. Produces ATP from ADP in the presence of a proton gradient across the membrane. The gamma chain is believed to be important in regulating ATPase activity and the flow of protons through the CF(0) complex. The protein is ATP synthase gamma chain of Rickettsia prowazekii (strain Madrid E).